A 542-amino-acid chain; its full sequence is 4-coumarate--CoA ligase 2 (542 aa).

ATP-binding residues include Ser-189, Ser-190, Gly-191, Thr-192, Thr-193, and Lys-197. (E)-4-coumaroyl-AMP-binding residues include Tyr-239 and Ser-243. (E)-caffeoyl-AMP is bound by residues Tyr-239 and Ser-243. Residues Tyr-239 and Ser-243 each coordinate (E)-feruloyl-AMP. CoA is bound at residue Lys-260. The SBD1 stretch occupies residues 262–331 (DIVSFLELIQ…AKFPNAKLGQ (70 aa)). Ala-309 provides a ligand contact to (E)-4-coumaroyl-AMP. Ala-309 lines the (E)-caffeoyl-AMP pocket. Ala-309 contributes to the (E)-feruloyl-AMP binding site. Positions 331, 332, and 336 each coordinate ATP. 7 residues coordinate (E)-4-coumaroyl-AMP: Gly-332, Thr-336, Met-344, Asp-420, Arg-435, Lys-437, and Lys-441. Residues Gly-332, Thr-336, Met-344, Asp-420, Arg-435, Lys-437, and Lys-441 each contribute to the (E)-caffeoyl-AMP site. Positions 332, 336, 344, 420, 435, 437, and 441 each coordinate (E)-feruloyl-AMP. Residues Gly-332 and Thr-336 each contribute to the AMP site. Residues 332 to 399 (GYGMTEAGPV…IRGDQIMKGY (68 aa)) form an SBD2 region. Asp-420 and Arg-435 together coordinate ATP. Asp-420 contacts AMP. AMP-binding residues include Lys-437 and Lys-441. The CoA site is built by Lys-443 and Gly-444. Gln-446 contributes to the AMP binding site. An ATP-binding site is contributed by Lys-526.

It belongs to the ATP-dependent AMP-binding enzyme family. The cofactor is Mg(2+). In terms of tissue distribution, mainly expressed in old stems and, to a lower extent, in flowers (e.g. in ovary), leaves, young stems, shoot tips and patel limbs.

The catalysed reaction is (E)-4-coumarate + ATP + CoA = (E)-4-coumaroyl-CoA + AMP + diphosphate. It catalyses the reaction (E)-caffeate + ATP + CoA = (E)-caffeoyl-CoA + AMP + diphosphate. The enzyme catalyses (E)-ferulate + ATP + CoA = (E)-feruloyl-CoA + AMP + diphosphate. It carries out the reaction (E)-cinnamate + ATP + CoA = (E)-cinnamoyl-CoA + AMP + diphosphate. The catalysed reaction is (E)-4-coumarate + ATP + H(+) = (E)-4-coumaroyl-AMP + diphosphate. It catalyses the reaction (E)-4-coumaroyl-AMP + CoA = (E)-4-coumaroyl-CoA + AMP + H(+). The enzyme catalyses (E)-caffeate + ATP + H(+) = (E)-caffeoyl-AMP + diphosphate. It carries out the reaction (E)-caffeoyl-AMP + CoA = (E)-caffeoyl-CoA + AMP + H(+). The catalysed reaction is (E)-ferulate + ATP + H(+) = (E)-feruloyl-AMP + diphosphate. It catalyses the reaction (E)-feruloyl-AMP + CoA = (E)-feruloyl-CoA + AMP + H(+). It functions in the pathway phytoalexin biosynthesis; 3,4',5-trihydroxystilbene biosynthesis; 3,4',5-trihydroxystilbene from trans-4-coumarate: step 1/2. Its function is as follows. Major enzyme of the phenylpropanoid pathway that mediates the production of several precursors for numerous metabolites and regulates carbon flow. Catalyzes the formation of CoA thioesters using 4-coumarate, ferulate, caffeate, and cinnamate as substrates. Follows a two-step reaction mechanism, wherein a (hydroxy)cinnamate substrate first undergoes adenylation by ATP leading to an acyl-AMP, followed by a thioesterification in the presence of CoA to yield the final (hydroxy)cinnamoyl-CoA product. Almost inactive toward sinapate. The protein is 4-coumarate--CoA ligase 2 of Nicotiana tabacum (Common tobacco).